Here is a 121-residue protein sequence, read N- to C-terminus: RING-box protein HRT1 (121 aa).

Positions 1–31 are disordered; the sequence is MSNEVDRMDVDEDESQNIAQSSNQSAPVETK. Phosphoserine is present on Ser15. The segment covering 16–26 has biased composition (low complexity); it reads QNIAQSSNQSA. Zn(2+)-binding residues include Cys55, Cys58, Cys66, Cys69, Cys81, Cys88, His90, His93, His95, Cys107, and Asp110. Residues 55–111 form an RING-type zinc finger; sequence CAICRNHIMEPCIECQPKAMTDTDNECVAAWGVCNHAFHLHCINKWIKTRDACPLDN.

The protein belongs to the RING-box family. As to quaternary structure, component of multiple cullin-RING ligases (CRLs) composed of 4 subunits: the RING protein HRT1, a cullin, a linker protein, and one of many alternative substrate receptors. Component of SCF E3 ubiquitin ligase complexes containing the cullin CDC53, the linker protein SKP1/CBF3D, and substrate receptors containing F-box motifs like DAS1 or GRR1. Component of RTT101(MMS1) E3 ubiquitin ligase complexes containing the cullin RTT101, the linker protein MMS1, and substrate receptors belonging to a protein family described as DCAF (DDB1- and CUL4-associated factor) like MMS22. Component of CRL3 E3 ubiquitin ligase complexes containing the cullin CUL3, the linker protein ELC1, and substrate receptors containing SOCS-box motifs like ELA1. Interacts with CDC53, CUL3, RTT101, CDC4 and CDC34/UBC3.

Its subcellular location is the cytoplasm. It localises to the nucleus. Its pathway is protein modification; protein ubiquitination. Its function is as follows. Core component of multiple cullin-RING-based E3 ubiquitin-protein ligase complexes (CRLs), which mediate the ubiquitination of target proteins. Recruits the E2 ubiquitin-conjugating enzyme CDC34/UBC3 to the complex and brings it into close proximity to the substrate. Also stimulates CDC34/UBC3 autoubiquitination and promotes the neddylation of CDC53 and RTT101. Component of the SCF(CDC4) ubiquitin ligase required for ubiquitination of the cyclin-dependent kinase inhibitor SIC1 and for the G1-to-S phase transition. Component of the RTT101(MMS1-MMS22) ubiquitin ligase that promotes fork progression through damaged DNA or natural pause sites. Component of the CRL3(ELA1) ubiquitin ligase required for ubiquitination of RPB1, the largest subunit of RNA polymerase II (Pol II), which targets Pol II for proteasomal degradation in DNA-damaged cells. In Saccharomyces cerevisiae (strain ATCC 204508 / S288c) (Baker's yeast), this protein is RING-box protein HRT1 (HRT1).